Consider the following 362-residue polypeptide: Probable prephenate dehydrogenase NovF (362 aa).

A Prephenate/arogenate dehydrogenase domain is found at 2–283; sequence RTAVIIGTGM…GIDGSNRVPG (282 aa).

This sequence belongs to the prephenate/arogenate dehydrogenase family.

The catalysed reaction is prephenate + NAD(+) = 3-(4-hydroxyphenyl)pyruvate + CO2 + NADH. The protein operates within antibiotic biosynthesis; novobiocin biosynthesis. In terms of biological role, probable prephenate dehydrogenase that produces 4-hydroxyphenylpyruvate (4HPP) in the novobiocin biosynthesis pathway. Novobiocin is an aminocoumarin family antibiotic that targets bacterial DNA gyrases. The sequence is that of Probable prephenate dehydrogenase NovF (novF) from Streptomyces niveus (Streptomyces spheroides).